The primary structure comprises 264 residues: Tritrans,polycis-undecaprenyl-diphosphate synthase (geranylgeranyl-diphosphate specific) (264 aa).

Asp-43 is a catalytic residue. A Mg(2+)-binding site is contributed by Asp-43. Substrate is bound by residues 44-47 (GNRR), Trp-48, His-60, and 88-90 (STE). The active-site Proton acceptor is Asn-91. Substrate is bound by residues Phe-92, Arg-94, Arg-213, and 219-221 (RIS). Glu-232 is a Mg(2+) binding site.

This sequence belongs to the UPP synthase family. Homodimer. Mg(2+) serves as cofactor.

It carries out the reaction geranylgeranyl diphosphate + 7 isopentenyl diphosphate = tri-trans,hepta-cis-undecaprenyl diphosphate + 7 diphosphate. Catalyzes the sequential condensation of isopentenyl diphosphate (IPP) with geranylgeranyl diphosphate (GGPP) to yield (2Z,6Z,10Z,14Z,18Z,22Z,26Z,30E,34E,38E)-undecaprenyl diphosphate (tritrans,heptacis-UPP). It is probably the precursor of glycosyl carrier lipids. The polypeptide is Tritrans,polycis-undecaprenyl-diphosphate synthase (geranylgeranyl-diphosphate specific) (Thermococcus kodakarensis (strain ATCC BAA-918 / JCM 12380 / KOD1) (Pyrococcus kodakaraensis (strain KOD1))).